Here is a 554-residue protein sequence, read N- to C-terminus: Phosphoglucomutase (554 aa).

Arg21 serves as a coordination point for alpha-D-glucose 1,6-bisphosphate. A Phosphothreonine modification is found at Thr111. An alpha-D-glucose 1,6-bisphosphate-binding site is contributed by Ser113. Ser113 (phosphoserine intermediate) is an active-site residue. The Mg(2+) site is built by Ser113, Asp278, Asp280, and Asp282. Phosphoserine is present on Ser113. Residues Asp282, Arg283, Thr346, Glu365, Ser367, and Lys378 each contribute to the alpha-D-glucose 1,6-bisphosphate site.

The protein belongs to the phosphohexose mutase family. In terms of assembly, monomer. Requires Mg(2+) as cofactor.

Its subcellular location is the cytoplasm. The protein localises to the nucleus. The enzyme catalyses alpha-D-glucose 1-phosphate = alpha-D-glucose 6-phosphate. It carries out the reaction O-phospho-L-seryl-[protein] + alpha-D-glucose 1-phosphate = alpha-D-glucose 1,6-bisphosphate + L-seryl-[protein]. The catalysed reaction is alpha-D-glucose 1,6-bisphosphate + L-seryl-[protein] = O-phospho-L-seryl-[protein] + alpha-D-glucose 6-phosphate. Functionally, catalyzes the reversible isomerization of alpha-D-glucose 1-phosphate to alpha-D-glucose 6-phosphate. The mechanism proceeds via the intermediate compound alpha-D-glucose 1,6-bisphosphate. Key enzyme in hexose metabolism. The reverse reaction is an essential step for biosynthesis because glucose 1-phosphate is the starting point for the synthesis of UDP-glucose, which acts as a precursor for the synthesis of oligosaccharides and trehalose. This is Phosphoglucomutase from Schizosaccharomyces pombe (strain 972 / ATCC 24843) (Fission yeast).